We begin with the raw amino-acid sequence, 141 residues long: Transcription antitermination protein NusB (141 aa).

Belongs to the NusB family.

In terms of biological role, involved in transcription antitermination. Required for transcription of ribosomal RNA (rRNA) genes. Binds specifically to the boxA antiterminator sequence of the ribosomal RNA (rrn) operons. The polypeptide is Transcription antitermination protein NusB (Neisseria meningitidis serogroup A / serotype 4A (strain DSM 15465 / Z2491)).